The sequence spans 410 residues: F-box protein At3g19890 (410 aa).

Positions 2–49 constitute an F-box domain; it reads TMISDLSKDLVEEILSKAPITSLGAVRSTHKQWNALSKGRLLYKAEAK. The interval 386-410 is disordered; that stretch reads EDKCKSIKMVDTKRQRKKRKRKSKR. The span at 387-398 shows a compositional bias: basic and acidic residues; the sequence is DKCKSIKMVDTK. Basic residues predominate over residues 399–410; it reads RQRKKRKRKSKR.

This is F-box protein At3g19890 from Arabidopsis thaliana (Mouse-ear cress).